Here is a 262-residue protein sequence, read N- to C-terminus: Cytochrome c oxidase subunit 3 (262 aa).

6 helical membrane passes run 39–59, 83–103, 120–140, 163–183, 198–218, and 240–260; these read YDIS…YQWW, GMIL…WAFF, MGII…ILLA, GLFF…YEYI, FFMA…FLLV, and AWYW…IYWW.

This sequence belongs to the cytochrome c oxidase subunit 3 family. Component of the cytochrome c oxidase (complex IV, CIV), a multisubunit enzyme composed of a catalytic core of 3 subunits and several supernumerary subunits. The complex exists as a monomer or a dimer and forms supercomplexes (SCs) in the inner mitochondrial membrane with ubiquinol-cytochrome c oxidoreductase (cytochrome b-c1 complex, complex III, CIII).

It is found in the mitochondrion inner membrane. The enzyme catalyses 4 Fe(II)-[cytochrome c] + O2 + 8 H(+)(in) = 4 Fe(III)-[cytochrome c] + 2 H2O + 4 H(+)(out). Functionally, component of the cytochrome c oxidase, the last enzyme in the mitochondrial electron transport chain which drives oxidative phosphorylation. The respiratory chain contains 3 multisubunit complexes succinate dehydrogenase (complex II, CII), ubiquinol-cytochrome c oxidoreductase (cytochrome b-c1 complex, complex III, CIII) and cytochrome c oxidase (complex IV, CIV), that cooperate to transfer electrons derived from NADH and succinate to molecular oxygen, creating an electrochemical gradient over the inner membrane that drives transmembrane transport and the ATP synthase. Cytochrome c oxidase is the component of the respiratory chain that catalyzes the reduction of oxygen to water. Electrons originating from reduced cytochrome c in the intermembrane space (IMS) are transferred via the dinuclear copper A center (CU(A)) of subunit 2 and heme A of subunit 1 to the active site in subunit 1, a binuclear center (BNC) formed by heme A3 and copper B (CU(B)). The BNC reduces molecular oxygen to 2 water molecules using 4 electrons from cytochrome c in the IMS and 4 protons from the mitochondrial matrix. This is Cytochrome c oxidase subunit 3 (mt:CoIII) from Drosophila melanogaster (Fruit fly).